The sequence spans 209 residues: Ribonuclease HII (209 aa).

One can recognise an RNase H type-2 domain in the interval 25–209 (RRIAGIDEAG…ATFRGVREYL (185 aa)). A divalent metal cation-binding residues include Asp-31, Glu-32, and Asp-123.

This sequence belongs to the RNase HII family. The cofactor is Mn(2+). Mg(2+) is required as a cofactor.

The protein resides in the cytoplasm. It catalyses the reaction Endonucleolytic cleavage to 5'-phosphomonoester.. Functionally, endonuclease that specifically degrades the RNA of RNA-DNA hybrids. The polypeptide is Ribonuclease HII (Syntrophotalea carbinolica (strain DSM 2380 / NBRC 103641 / GraBd1) (Pelobacter carbinolicus)).